The sequence spans 238 residues: Ribonuclease M (238 aa).

Disulfide bonds link C5/C22, C13/C58, C21/C126, C66/C118, and C191/C225. Residue H51 is part of the active site. Residue N74 is glycosylated (N-linked (GlcNAc...) asparagine). Residues E111 and H115 contribute to the active site.

The protein belongs to the RNase T2 family.

The catalysed reaction is a ribonucleotidyl-ribonucleotide-RNA + H2O = a 3'-end 3'-phospho-ribonucleotide-RNA + a 5'-end dephospho-ribonucleoside-RNA + H(+). In terms of biological role, this is a base non-specific and adenylic acid preferential ribonuclease. This Aspergillus phoenicis (Aspergillus saitoi) protein is Ribonuclease M.